The primary structure comprises 87 residues: DNA-directed RNA polymerase subunit omega (87 aa).

Belongs to the RNA polymerase subunit omega family. In terms of assembly, the RNAP catalytic core consists of 2 alpha, 1 beta, 1 beta' and 1 omega subunit. When a sigma factor is associated with the core the holoenzyme is formed, which can initiate transcription.

The catalysed reaction is RNA(n) + a ribonucleoside 5'-triphosphate = RNA(n+1) + diphosphate. Functionally, promotes RNA polymerase assembly. Latches the N- and C-terminal regions of the beta' subunit thereby facilitating its interaction with the beta and alpha subunits. The sequence is that of DNA-directed RNA polymerase subunit omega from Alcanivorax borkumensis (strain ATCC 700651 / DSM 11573 / NCIMB 13689 / SK2).